The sequence spans 216 residues: RNA pyrophosphohydrolase (216 aa).

The region spanning 6 to 149 (GFRPNVGIIL…KRDVYQLALT (144 aa)) is the Nudix hydrolase domain. The short motif at 38–59 (GGIKYGETPMQAMYRELHEETG) is the Nudix box element. The tract at residues 159-180 (AQRTDKSRGPRAPRYPRVSNGH) is disordered.

It belongs to the Nudix hydrolase family. RppH subfamily. The cofactor is a divalent metal cation.

In terms of biological role, accelerates the degradation of transcripts by removing pyrophosphate from the 5'-end of triphosphorylated RNA, leading to a more labile monophosphorylated state that can stimulate subsequent ribonuclease cleavage. The protein is RNA pyrophosphohydrolase of Burkholderia thailandensis (strain ATCC 700388 / DSM 13276 / CCUG 48851 / CIP 106301 / E264).